The primary structure comprises 185 residues: Elongation factor P (185 aa).

It belongs to the elongation factor P family.

The protein localises to the cytoplasm. It functions in the pathway protein biosynthesis; polypeptide chain elongation. Its function is as follows. Involved in peptide bond synthesis. Stimulates efficient translation and peptide-bond synthesis on native or reconstituted 70S ribosomes in vitro. Probably functions indirectly by altering the affinity of the ribosome for aminoacyl-tRNA, thus increasing their reactivity as acceptors for peptidyl transferase. This Caldicellulosiruptor saccharolyticus (strain ATCC 43494 / DSM 8903 / Tp8T 6331) protein is Elongation factor P.